The primary structure comprises 796 residues: Pathogenesis-related homeodomain protein (796 aa).

2 disordered regions span residues 34 to 57 and 80 to 99; these read KKGKEVSNKRNSKQNKRKAEEELC and VKKTRKRKSKRQQKDNKVEV. Residues 81–90 are compositionally biased toward basic residues; it reads KKTRKRKSKR. The PHD-type zinc finger occupies 190 to 247; it reads HIFCAECNSREAFPDNDIILCDGTCNRAFHQKCLDPPLETESIPPGDQGWFCKFCDCK. Disordered regions lie at residues 282–347, 393–422, and 511–736; these read SEAT…STGS, LQEQGSEDEDWGPNDRRKRKRESDAGSTLV, and NRKT…TEEE. Acidic residues predominate over residues 292-303; the sequence is WPSDDSKDDDYD. Residues 452–511 constitute a DNA-binding region (homeobox); it reads GGRRRMFRLPRNAVEKLRQVFAETELPSKAVRDRLAKELSLDPEKVNKWFKNTRYMALRN. 2 stretches are compositionally biased toward polar residues: residues 538 to 547 and 560 to 569; these read ENNTETNEVQ and ATNQNILSPC. Over residues 570–580 the composition is skewed to low complexity; it reads NNNQEEFQQEN. Over residues 581–600 the composition is skewed to polar residues; it reads VSFPSPTDESQQYLEQNDSS. 4 repeat units span residues 605-631, 632-658, 659-685, and 686-712. A 5 X 27 AA tandem repeats region spans residues 605–735; that stretch reads PHEKQSSEIS…KETGRKMTEE (131 aa). Basic and acidic residues-rich tracts occupy residues 624-636, 645-690, and 700-733; these read TESKMMKEPHEEL, AAEE…HDEL, and VEEKETGSKMTEESHEELSNEMSLEEKETGRKMT. The stretch at 713–735 is one 5; truncated repeat; it reads SHEELSNEMSLEEKETGRKMTEE. The leucine-zipper stretch occupies residues 738 to 759; it reads LEAVMEMLCRTENKLLDVTQRL.

The protein belongs to the PHD-associated homeobox family.

It localises to the nucleus. Functionally, specifically binds to the fungal elicitor-responsive DNA element, 5'-CTAATTGTTTA-3', of the gene PR2 promoter. The sequence is that of Pathogenesis-related homeodomain protein (PRH) from Arabidopsis thaliana (Mouse-ear cress).